The primary structure comprises 540 residues: Coiled-coil domain-containing protein 116 (540 aa).

Residues 79 to 102 (QVLDSLQTVVEQATECVATMKTEA) are a coiled coil. Residues 347–400 (PGNSDLQPSSKASLPTDREARGETCYSPTSASSPKTSHRKSKDRRGSPSNAVQM) form a disordered region. Composition is skewed to polar residues over residues 350–359 (SDLQPSSKAS) and 372–381 (YSPTSASSPK). Ser-393 carries the post-translational modification Phosphoserine.

It localises to the cytoplasm. Its subcellular location is the cytoskeleton. The protein resides in the microtubule organizing center. The protein localises to the centrosome. The protein is Coiled-coil domain-containing protein 116 (Ccdc116) of Rattus norvegicus (Rat).